The primary structure comprises 331 residues: Mitochondrial carrier protein CoAc1 (331 aa).

6 helical membrane passes run 16 to 36, 79 to 99, 123 to 143, 193 to 213, 231 to 251, and 292 to 312; these read LVDT…AGAI, FYKG…LHYM, LVAG…LDLA, GIGP…YIYE, LPCG…LDVV, and FAGL…GFTV. 3 Solcar repeats span residues 21–107, 117–218, and 225–319; these read PVLA…YRDW, SGPI…LKRH, and NSVR…MKSW.

This sequence belongs to the mitochondrial carrier (TC 2.A.29) family. Expressed throughout the plant.

It localises to the mitochondrion inner membrane. In terms of biological role, required for the accumulation of coenzyme A in the mitochondrial matrix. In Arabidopsis thaliana (Mouse-ear cress), this protein is Mitochondrial carrier protein CoAc1.